Here is a 190-residue protein sequence, read N- to C-terminus: Dynein axonemal light chain 1 (190 aa).

Ala-2 carries the post-translational modification N-acetylalanine. LRR repeat units follow at residues 47–69 (LANC…LNGL), 70–93 (KNLR…AVGD), 95–114 (LEEL…IHVM), and 115–138 (RKLK…KLAE). At Ser-56 the chain carries Phosphoserine.

Belongs to the dynein light chain LC1-type family. In terms of assembly, interacts with ZMYND10 (via C-terminus). Interacts with DNAH5, a outer arm dynein heavy chain. Interacts with tubulin located within the A-tubule of the outer doublets in a ATP-independent manner.

It localises to the cytoplasm. Its subcellular location is the cytoskeleton. The protein localises to the cilium axoneme. Functionally, part of the multisubunit axonemal ATPase complexes that generate the force for cilia motility and govern beat frequency. Component of the outer arm dynein (ODA). May be involved in a mechanosensory feedback mechanism controlling ODA activity based on external conformational cues by tethering the outer arm dynein heavy chain (DNAH5) to the microtubule within the axoneme. Important for ciliary function in the airways and for the function of the cilia that produce the nodal flow essential for the determination of the left-right asymmetry. This Rattus norvegicus (Rat) protein is Dynein axonemal light chain 1.